We begin with the raw amino-acid sequence, 79 residues long: uncharacterized protein (79 aa).

The protein belongs to the UPF0440 family.

This is an uncharacterized protein from Methanocella arvoryzae (strain DSM 22066 / NBRC 105507 / MRE50).